Consider the following 328-residue polypeptide: tRNA uridine(34) hydroxylase (328 aa).

Residues 130 to 224 (LDEDTVVLDT…YGKDPEVQGE (95 aa)) form the Rhodanese domain. The active-site Cysteine persulfide intermediate is C184.

The protein belongs to the TrhO family.

It catalyses the reaction uridine(34) in tRNA + AH2 + O2 = 5-hydroxyuridine(34) in tRNA + A + H2O. Functionally, catalyzes oxygen-dependent 5-hydroxyuridine (ho5U) modification at position 34 in tRNAs. The chain is tRNA uridine(34) hydroxylase from Streptococcus pyogenes serotype M3 (strain SSI-1).